A 176-amino-acid polypeptide reads, in one-letter code: Ribosome rescue factor SmrB (176 aa).

One can recognise a Smr domain in the interval 93–168 (LDLHGYRQSE…GDAALLVLID (76 aa)).

This sequence belongs to the SmrB family. As to quaternary structure, associates with collided ribosomes, but not with correctly translating polysomes.

Acts as a ribosome collision sensor. Detects stalled/collided disomes (pairs of ribosomes where the leading ribosome is stalled and a second ribosome has collided with it) and endonucleolytically cleaves mRNA at the 5' boundary of the stalled ribosome. Stalled/collided disomes form a new interface (primarily via the 30S subunits) that binds SmrB. Cleaved mRNA becomes available for tmRNA ligation, leading to ribosomal subunit dissociation and rescue of stalled ribosomes. This Shewanella sp. (strain ANA-3) protein is Ribosome rescue factor SmrB.